The following is a 443-amino-acid chain: Putative F-box/FBD/LRR-repeat protein At5g22670 (443 aa).

The 47-residue stretch at 10-56 (QDSISLLPDDLLCRILSNLPTKVAVRTSVLSKRWKRFSLSVPLLEFN) folds into the F-box domain. LRR repeat units lie at residues 139–165 (SLRL…HLID), 166–191 (NIYP…NVSR), 219–243 (YGDI…SLRD), 275–300 (NFLL…TMSG), and 325–353 (YAVF…VLEL). The FBD domain maps to 361-412 (LLILSSSIPKCLRSSLEHVEIHTPISGAEAEMKLVKYFLENSAVLKKFTLQL).

The polypeptide is Putative F-box/FBD/LRR-repeat protein At5g22670 (Arabidopsis thaliana (Mouse-ear cress)).